A 124-amino-acid polypeptide reads, in one-letter code: Fluoride-specific ion channel FluC (124 aa).

Helical transmembrane passes span 4 to 24 (VLYIAVFGALGCLSRYYLSGW), 32 to 52 (AFPYGTFAVNIVGAFCIGLIM), 67 to 87 (IGLTIGFLGGLTTFSTFSYET), and 101 to 121 (ANVLFSVMTCLVFTWLGIIVA). Positions 75 and 78 each coordinate Na(+).

Belongs to the fluoride channel Fluc/FEX (TC 1.A.43) family.

Its subcellular location is the cell inner membrane. It carries out the reaction fluoride(in) = fluoride(out). Na(+) is not transported, but it plays an essential structural role and its presence is essential for fluoride channel function. Its function is as follows. Fluoride-specific ion channel. Important for reducing fluoride concentration in the cell, thus reducing its toxicity. The polypeptide is Fluoride-specific ion channel FluC (Geotalea uraniireducens (strain Rf4) (Geobacter uraniireducens)).